Here is a 369-residue protein sequence, read N- to C-terminus: Peptide chain release factor 2 (369 aa).

Gln-251 is modified (N5-methylglutamine).

This sequence belongs to the prokaryotic/mitochondrial release factor family. Post-translationally, methylated by PrmC. Methylation increases the termination efficiency of RF2.

It localises to the cytoplasm. Peptide chain release factor 2 directs the termination of translation in response to the peptide chain termination codons UGA and UAA. The polypeptide is Peptide chain release factor 2 (Acidothermus cellulolyticus (strain ATCC 43068 / DSM 8971 / 11B)).